The sequence spans 473 residues: Crt homolog 1 (473 aa).

Topologically, residues 1–49 (MTNNDKEKQPLLSSINNEDDNGATINIVEPVPWYSNIPQKIKNSMSKET) are cytoplasmic. Residues 50-70 (ITILIYVVLYVTSGVINSVLL) form a helical membrane-spanning segment. Over 71-80 (KKVMNKFTNY) the chain is Vacuolar. A helical transmembrane segment spans residues 81-101 (AFFLSQLTNFGYVPIFGAVTA). The Cytoplasmic segment spans residues 102–121 (YKIFFTKDIPQETRDFPTRK). A helical membrane pass occupies residues 122–142 (FAIMGALDAITGFFVVIGGVS). The Vacuolar segment spans residues 143-146 (TSGP). The helical transmembrane segment at 147–167 (LQQLLNQAIIPFTMIASFIFL) threads the bilayer. Residues 168 to 175 (KERYSLIQ) lie on the Cytoplasmic side of the membrane. Residues 176-196 (LGGALVIIGGVVTSLIPSLLG) traverse the membrane as a helical segment. Topologically, residues 197–207 (GSSGGNKPFWN) are vacuolar. A helical transmembrane segment spans residues 208-228 (FFYLLSVIPGALSNVYKDIGF). Residues 229-248 (QAVADMDVWYLQYWDSLYQS) lie on the Cytoplasmic side of the membrane. Residues 249–269 (IFGLFLFPVNNWLPPPATVKF) traverse the membrane as a helical segment. Over 270–322 (EQILPFMKEGAECLAGINSIIPSYINGTSSFTATSCTYAPDATITCDDCHNAW) the chain is Vacuolar. Asn-295 is a glycosylation site (N-linked (GlcNAc...) asparagine). A helical membrane pass occupies residues 323 to 343 (IVIILYMTINIIYNIFILLVL). Over 344 to 352 (KHAGATVYS) the chain is Cytoplasmic. Residues 353–373 (IANTLRLPLTNIVFSIHFIMG) form a helical membrane-spanning segment. Ser-374 is a topological domain (vacuolar). A helical membrane pass occupies residues 375-395 (AVSPFSGLSVAGLVIILVGLG). Residues 396-473 (GYRVGSMIKQ…AANNNNYGDA (78 aa)) are Cytoplasmic-facing.

This sequence belongs to the CRT-like transporter family.

Its subcellular location is the vacuole membrane. Nutrient transporter. Involved in maintaining the osmotic homeostasis of the digestive vacuole. This is Crt homolog 1 (crtp1) from Dictyostelium discoideum (Social amoeba).